Reading from the N-terminus, the 184-residue chain is UPF0398 protein BAA_1648 (184 aa).

It belongs to the UPF0398 family.

The sequence is that of UPF0398 protein BAA_1648 from Bacillus anthracis (strain A0248).